A 551-amino-acid polypeptide reads, in one-letter code: Cleavage and polyadenylation specificity factor subunit 6 (551 aa).

Positions 1-213 (MADGVDHIDI…RGRFPGAVPG (213 aa)) are necessary for interaction with NXF1. The RRM domain occupies 81–161 (IALYIGNLTW…QSPVVTPCNK (81 aa)). Residues 81–161 (IALYIGNLTW…QSPVVTPCNK (81 aa)) are necessary for interaction with NUDT21/CPSF5. The interval 81 to 161 (IALYIGNLTW…QSPVVTPCNK (81 aa)) is necessary for nuclear paraspeckles localization. Position 157 is a phosphothreonine (Thr157). A compositionally biased stretch (polar residues) spans 169–180 (MQSRKTTQSGQM). Disordered stretches follow at residues 169-411 (MQSR…PLSE) and 477-551 (LHGI…YRHR). Gly residues predominate over residues 184–193 (GKAGPPGGGS). The GAR motif lies at 202 to 206 (RGRGR). Residues 207–219 (FPGAVPGGDRFPG) show a composition bias toward low complexity. 3 stretches are compositionally biased toward pro residues: residues 220–265 (PAGP…PLAG), 285–366 (GQPP…PPPT), and 377–388 (GPPPTDPYGRPP). The span at 389–404 (PYDRGDYGPPGREMDT) shows a compositional bias: basic and acidic residues. Phosphothreonine is present on residues Thr404 and Thr407. The interval 404–551 (TARTPLSEAE…RDREREYRHR (148 aa)) is sufficient for nuclear speckle localization. The tract at residues 405–551 (ARTPLSEAEF…RDREREYRHR (147 aa)) is necessary for RNA-binding. The tract at residues 481–551 (ESKSYGSGSR…RDREREYRHR (71 aa)) is necessary for interaction with SRSF3, SRSF7 and TRA2B/SFRS10. Basic and acidic residues predominate over residues 489 to 503 (SRRERSRERDHSRSR). Residues 490–551 (RRERSRERDH…RDREREYRHR (62 aa)) form an arg/Ser-rich domain region. Phosphoserine is present on residues Ser494, Ser500, Ser511, Ser513, and Ser525. The segment covering 504–514 (EKSRRHKSRSR) has biased composition (basic residues). The sufficient for nuclear targeting stretch occupies residues 510–551 (KSRSRDRHDDYYRERSRERERHRDRDRDRDRERDREREYRHR). A compositionally biased stretch (basic and acidic residues) spans 515–551 (DRHDDYYRERSRERERHRDRDRDRDRERDREREYRHR).

The protein belongs to the RRM CPSF6/7 family. In terms of assembly, component of the cleavage factor Im (CFIm) complex which is a heterotetramer composed of two subunits of NUDT21/CPSF5 and two subunits of CPSF6 or CPSF7 or a heterodimer of CPSF6 and CPSF7. The cleavage factor Im (CFIm) complex associates with the CPSF and CSTF complexes to promote the assembly of the core mRNA 3'-processing machinery. Associates with the exon junction complex (EJC). Associates with the 80S ribosome particle. Interacts (via the RRM domain) with NUDT21/CPSF5; this interaction is direct and enhances binding to RNA. Interacts (via Arg/Ser-rich domain) with FIP1L1 (preferentially via unphosphorylated form and Arg/Glu/Asp-rich domain); this interaction mediates, at least in part, the interaction between the CFIm and CPSF complexes and may be inhibited by CPSF6 hyper-phosphorylation. Interacts (via N-terminus) with NXF1; this interaction is direct. Interacts with SRSF3. Interacts with SRSF7. Interacts with SNRNP70. Interacts with TRA2B/SFRS10. Interacts with UPF1. Interacts with UPF3B. Interacts with VIRMA. Interacts (via Arg/Ser-rich domain) with TNPO3; promoting nuclear import of CPSF6 independently of its phosphorylation status. Interacts with YTHDC1. Phosphorylated. Phosphorylated in the Arg/Ser-rich domain by SRPK1, in vitro. In terms of processing, symmetrically dimethylated on arginine residues by PRMT5 in a WDR77- and CLNS1A-dependent manner. Asymmetrically dimethylated on arginine residues by PRMT1. Post-translationally, symmetrically dimethylated on arginine residues in the GAR motif by PRMT5 in a WDR77- and CLNS1A-dependent manner. Asymmetrically dimethylated on arginine residues in the GAR motif by PRMT1. As to expression, expressed in testis. Expressed in male germ cells (at protein level).

The protein resides in the nucleus. It localises to the nucleoplasm. Its subcellular location is the nucleus speckle. It is found in the cytoplasm. Component of the cleavage factor Im (CFIm) complex that functions as an activator of the pre-mRNA 3'-end cleavage and polyadenylation processing required for the maturation of pre-mRNA into functional mRNAs. CFIm contributes to the recruitment of multiprotein complexes on specific sequences on the pre-mRNA 3'-end, so called cleavage and polyadenylation signals (pA signals). Most pre-mRNAs contain multiple pA signals, resulting in alternative cleavage and polyadenylation (APA) producing mRNAs with variable 3'-end formation. The CFIm complex acts as a key regulator of cleavage and polyadenylation site choice during APA through its binding to 5'-UGUA-3' elements localized in the 3'-untranslated region (UTR) for a huge number of pre-mRNAs. CPSF6 enhances NUDT21/CPSF5 binding to 5'-UGUA-3' elements localized upstream of pA signals and promotes RNA looping, and hence activates directly the mRNA 3'-processing machinery. Plays a role in mRNA export. This is Cleavage and polyadenylation specificity factor subunit 6 from Mus musculus (Mouse).